The sequence spans 562 residues: Phosphopantothenoylcysteine decarboxylase subunit SIS2 (562 aa).

The span at 1–10 (MTAVASTSGK) shows a compositional bias: polar residues. Disordered regions lie at residues 1–63 (MTAV…SNAT), 97–165 (FSDL…KDYD), and 490–562 (GYPK…DKHQ). Residues 27 to 42 (GQKEILLDHEDAKGKD) show a composition bias toward basic and acidic residues. 2 stretches are compositionally biased toward polar residues: residues 44-63 (IINSPVSGRQSISPTLSNAT) and 99-113 (DLKQQQKQDSLTQLK). Residues Ser47, Ser50, Ser54, and Ser56 each carry the phosphoserine modification. Low complexity predominate over residues 121–134 (SPNSNPAPVSNSIP). The span at 142-156 (NHTNTSRTTQLSGSP) shows a compositional bias: polar residues. At Ser155 the chain carries Phosphoserine. Over residues 496–553 (EEEDDDEDEEEDDDEEEDTEDKNENNNDDDDDDDDDDDDDDDDDDDDDDDDEDEDEAE) the composition is skewed to acidic residues.

It belongs to the HFCD (homooligomeric flavin containing Cys decarboxylase) superfamily. In terms of assembly, interacts with the C-terminal domain of PPZ1. Component of the phosphopantothenoylcysteine decarboxylase (PPCDC) complex, a heterotrimer composed of CAB3, SIS2 and VHS3.

The protein localises to the nucleus. It is found in the cytoplasm. In terms of biological role, component of the phosphopantothenoylcysteine decarboxylase (PPCDC) involved in the coenzyme A synthesis. Acts as an inhibitory subunit of protein phosphatase PPZ1, which is involved in many cellular processes such as G1-S transition or salt tolerance. Also modulates the expression of the ENA1 ATPase. The chain is Phosphopantothenoylcysteine decarboxylase subunit SIS2 (SIS2) from Saccharomyces cerevisiae (strain ATCC 204508 / S288c) (Baker's yeast).